A 412-amino-acid polypeptide reads, in one-letter code: Transcription factor IIIA (412 aa).

The interval 1–20 (MSESDETKSISSLISSSSSS) is disordered. Positions 9 to 20 (SISSLISSSSSS) are enriched in low complexity. C2H2-type zinc fingers lie at residues 25–49 (YICT…LRTH), 55–79 (YKCT…IVSH), 85–107 (FHCS…EITH), 111–136 (FKCT…LSVH), 140–162 (LTCK…KLKH), 169–194 (YQCD…KQSH), and 197–219 (LKCP…MLSH). A C2H2-type 8; degenerate zinc finger spans residues 228-252 (WTCDYCDVGKFAKKNELVEHYNIFH). Positions 285–316 (LETEKLKVEEDEEDEEDSLDEKRSDVRSDSMS) are disordered. Positions 293-303 (EEDEEDEEDSL) are enriched in acidic residues. A C2H2-type 9 zinc finger spans residues 345 to 369 (INCPKNNCDRMFSREYDLRRHLKWH).

It is found in the nucleus. Its function is as follows. Transcription factor required for transcription of 5S rRNA by RNA polymerase III. This chain is Transcription factor IIIA (PZF1), found in Candida albicans (strain SC5314 / ATCC MYA-2876) (Yeast).